The sequence spans 257 residues: Acetylglutamate kinase (257 aa).

Substrate is bound by residues 43-44, R65, and N157; that span reads GG. Residues 180 to 185 and 208 to 210 each bind ATP; these read DVSGIL and IIT.

This sequence belongs to the acetylglutamate kinase family. ArgB subfamily. As to quaternary structure, homodimer.

It is found in the cytoplasm. The enzyme catalyses N-acetyl-L-glutamate + ATP = N-acetyl-L-glutamyl 5-phosphate + ADP. It functions in the pathway amino-acid biosynthesis; L-arginine biosynthesis; N(2)-acetyl-L-ornithine from L-glutamate: step 2/4. Its function is as follows. Catalyzes the ATP-dependent phosphorylation of N-acetyl-L-glutamate. The protein is Acetylglutamate kinase of Serratia proteamaculans (strain 568).